Here is a 145-residue protein sequence, read N- to C-terminus: Transcriptional regulator MraZ (145 aa).

SpoVT-AbrB domains follow at residues 5-50 and 81-124; these read TFNH…ALPQ and AHEV…DKAA.

Belongs to the MraZ family. In terms of assembly, forms oligomers.

It localises to the cytoplasm. The protein localises to the nucleoid. The chain is Transcriptional regulator MraZ from Anaeromyxobacter sp. (strain Fw109-5).